We begin with the raw amino-acid sequence, 342 residues long: Biotin synthase (342 aa).

In terms of domain architecture, Radical SAM core spans 55 to 274; the sequence is NAVQCNQLLN…IALARIMMPK (220 aa). [4Fe-4S] cluster is bound by residues C70, C74, and C77. [2Fe-2S] cluster-binding residues include C114, C145, C205, and R278.

It belongs to the radical SAM superfamily. Biotin synthase family. Homodimer. [4Fe-4S] cluster is required as a cofactor. It depends on [2Fe-2S] cluster as a cofactor.

It catalyses the reaction (4R,5S)-dethiobiotin + (sulfur carrier)-SH + 2 reduced [2Fe-2S]-[ferredoxin] + 2 S-adenosyl-L-methionine = (sulfur carrier)-H + biotin + 2 5'-deoxyadenosine + 2 L-methionine + 2 oxidized [2Fe-2S]-[ferredoxin]. The protein operates within cofactor biosynthesis; biotin biosynthesis; biotin from 7,8-diaminononanoate: step 2/2. Its function is as follows. Catalyzes the conversion of dethiobiotin (DTB) to biotin by the insertion of a sulfur atom into dethiobiotin via a radical-based mechanism. The sequence is that of Biotin synthase from Rhodopseudomonas palustris (strain BisB5).